We begin with the raw amino-acid sequence, 446 residues long: UPF0597 protein DvMF_1488 (446 aa).

This sequence belongs to the UPF0597 family.

In Nitratidesulfovibrio vulgaris (strain DSM 19637 / Miyazaki F) (Desulfovibrio vulgaris), this protein is UPF0597 protein DvMF_1488.